The primary structure comprises 382 residues: Pyrimidine monooxygenase RutA (382 aa).

Residues 68–69 (IK), Asn134, Glu143, 159–160 (RY), and Ser209 each bind FMN.

Belongs to the NtaA/SnaA/DszA monooxygenase family. RutA subfamily.

It carries out the reaction uracil + FMNH2 + NADH + O2 = (Z)-3-ureidoacrylate + FMN + NAD(+) + H2O + H(+). It catalyses the reaction thymine + FMNH2 + NADH + O2 = (Z)-2-methylureidoacrylate + FMN + NAD(+) + H2O + H(+). In terms of biological role, catalyzes the pyrimidine ring opening between N-3 and C-4 by an unusual flavin hydroperoxide-catalyzed mechanism, adding oxygen atoms in the process to yield ureidoacrylate peracid, that immediately reacts with FMN forming ureidoacrylate and FMN-N(5)-oxide. The FMN-N(5)-oxide reacts spontaneously with NADH to produce FMN. Requires the flavin reductase RutF to regenerate FMN in vivo. The sequence is that of Pyrimidine monooxygenase RutA from Escherichia coli O45:K1 (strain S88 / ExPEC).